The following is a 284-amino-acid chain: Phosphoribosylaminoimidazole-succinocarboxamide synthase (284 aa).

The protein belongs to the SAICAR synthetase family.

The enzyme catalyses 5-amino-1-(5-phospho-D-ribosyl)imidazole-4-carboxylate + L-aspartate + ATP = (2S)-2-[5-amino-1-(5-phospho-beta-D-ribosyl)imidazole-4-carboxamido]succinate + ADP + phosphate + 2 H(+). It participates in purine metabolism; IMP biosynthesis via de novo pathway; 5-amino-1-(5-phospho-D-ribosyl)imidazole-4-carboxamide from 5-amino-1-(5-phospho-D-ribosyl)imidazole-4-carboxylate: step 1/2. This Chromobacterium violaceum (strain ATCC 12472 / DSM 30191 / JCM 1249 / CCUG 213 / NBRC 12614 / NCIMB 9131 / NCTC 9757 / MK) protein is Phosphoribosylaminoimidazole-succinocarboxamide synthase.